Here is a 57-residue protein sequence, read N- to C-terminus: Large ribosomal subunit protein bL32 (57 aa).

It belongs to the bacterial ribosomal protein bL32 family.

The chain is Large ribosomal subunit protein bL32 from Streptomyces griseus subsp. griseus (strain JCM 4626 / CBS 651.72 / NBRC 13350 / KCC S-0626 / ISP 5235).